A 394-amino-acid polypeptide reads, in one-letter code: Guanine nucleotide-binding protein G(s) subunit alpha (394 aa).

The disordered stretch occupies residues 1–25 (MGCLGDSKTEDQRNEEKAQREANKK). G2 is lipidated: N-palmitoyl glycine. Residue C3 is the site of S-palmitoyl cysteine attachment. The span at 7–25 (SKTEDQRNEEKAQREANKK) shows a compositional bias: basic and acidic residues. The region spanning 39-394 (ATHRLLLLGA…RMHLRQYELL (356 aa)) is the G-alpha domain. A G1 motif region spans residues 42-55 (RLLLLGAGESGKST). Residue 47–55 (GAGESGKST) participates in GTP binding. S54 is a Mg(2+) binding site. The disordered stretch occupies residues 68 to 90 (FNGEGGEEDPQAARSNSDGEKAT). Residues 196–204 (DLLRCRVLT) form a G2 motif region. Residues 197 to 204 (LLRCRVLT), 223 to 227 (DVGGQ), 292 to 295 (NKQD), and A366 each bind GTP. T204 contributes to the Mg(2+) binding site. Residues 219–228 (FHMFDVGGQR) are G3 motif. The tract at residues 288-295 (ILFLNKQD) is G4 motif. Residues 364-369 (TCAVDT) form a G5 motif region.

The protein belongs to the G-alpha family. G(s) subfamily. Heterotrimeric G proteins are composed of 3 units; alpha, beta and gamma. The alpha chain contains the guanine nucleotide binding site. Interacts with CRY1; the interaction may block GPCR-mediated regulation of cAMP concentrations. Interacts with ADCY6 and stimulates its adenylyl cyclase activity. Interacts with ADCY2 and ADCY5. Stimulates the ADCY5 adenylyl cyclase activity. Interaction with SASH1.

Its subcellular location is the cell membrane. In terms of biological role, guanine nucleotide-binding proteins (G proteins) function as transducers in numerous signaling pathways controlled by G protein-coupled receptors (GPCRs). Signaling involves the activation of adenylyl cyclases, resulting in increased levels of the signaling molecule cAMP. GNAS functions downstream of several GPCRs, including beta-adrenergic receptors. Stimulates the Ras signaling pathway via RAPGEF2. This chain is Guanine nucleotide-binding protein G(s) subunit alpha (GNAS), found in Cricetulus longicaudatus (Long-tailed dwarf hamster).